We begin with the raw amino-acid sequence, 231 residues long: Large ribosomal subunit protein uL1 (231 aa).

The protein belongs to the universal ribosomal protein uL1 family. Part of the 50S ribosomal subunit.

Its function is as follows. Binds directly to 23S rRNA. The L1 stalk is quite mobile in the ribosome, and is involved in E site tRNA release. In terms of biological role, protein L1 is also a translational repressor protein, it controls the translation of the L11 operon by binding to its mRNA. This is Large ribosomal subunit protein uL1 from Pseudomonas fluorescens (strain Pf0-1).